A 178-amino-acid polypeptide reads, in one-letter code: Caveolin-1 (178 aa).

Ser2 carries the N-acetylserine modification. Ser2 is modified (phosphoserine). Positions 2–94 (SGGKYVDSEG…WKASFTTFTV (93 aa)) are required for homooligomerization. Residues 2-104 (SGGKYVDSEG…TKYWFYRLLS (103 aa)) lie on the Cytoplasmic side of the membrane. An N6-acetyllysine; alternate modification is found at Lys5. Lys5 is covalently cross-linked (Glycyl lysine isopeptide (Lys-Gly) (interchain with G-Cter in ubiquitin); alternate). Tyr6 carries the post-translational modification Phosphotyrosine. Ser9 bears the Phosphoserine mark. At Tyr14 the chain carries Phosphotyrosine; by ABL1. Position 25 is a phosphotyrosine (Tyr25). Glycyl lysine isopeptide (Lys-Gly) (interchain with G-Cter in ubiquitin) cross-links involve residues Lys26, Lys30, Lys39, Lys47, and Lys57. Residues 82–94 (DGIWKASFTTFTV) form an interaction with CAVIN3 region. Positions 105-125 (TLFGIPMALIWGIYFAILSFL) form an intramembrane region, helical. The Cytoplasmic segment spans residues 126–178 (HIWAVVPCIKSFLIEIQCIGRVYSIYIHTFCDPLFEAVGKLFSNIRINMQKEI). Residues 131–142 (VPCIKSFLIEIQ) are interacts with SPRY1, SPRY2, SPRY3 and SPRY4. 3 S-palmitoyl cysteine lipidation sites follow: Cys133, Cys143, and Cys156. Positions 149-160 (SIYIHTFCDPLF) are interacts with SPRY1, SPRY2, and SPRY4. Residues 167-178 (FSNIRINMQKEI) form an interacts with SPRY1, SPRY2, SPRY3 and SPRY4 region.

The protein belongs to the caveolin family. In terms of assembly, homooligomer. Interacts with GLIPR2. Interacts with NOSTRIN. Interacts with SNAP25 and STX1A. Interacts (via the N-terminus) with DPP4; the interaction is direct. Interacts with CTNNB1, CDH1 and JUP. Interacts with PACSIN2; this interaction induces membrane tubulation. Interacts with SLC7A9. Interacts with BMX and BTK. Interacts with TGFBR1. Interacts with CAVIN3 (via leucine-zipper domain) in a cholesterol-sensitive manner. Interacts with CAVIN1. Interacts with EHD2 in a cholesterol-dependent manner. Forms a ternary complex with UBXN6 and VCP; mediates CAV1 targeting to lysosomes for degradation. Interacts with ABCG1; this interaction regulates ABCG1-mediated cholesterol efflux. Interacts with NEU3; this interaction enhances NEU3 sialidase activity within caveola. Interacts (via C-terminus) with SPRY1, SPRY2 (via C-terminus), SPRY3, and SPRY4. Interacts with IGFBP5; this interaction allows trafficking of IGFBP5 from the plasma membrane to the nucleus. Phosphorylated at Tyr-14 by ABL1 in response to oxidative stress. In terms of processing, ubiquitinated. Undergo monoubiquitination and multi- and/or polyubiquitination. Monoubiquitination of N-terminal lysines promotes integration in a ternary complex with UBXN6 and VCP which promotes oligomeric CAV1 targeting to lysosomes for degradation. Ubiquitinated by ZNRF1; leading to degradation and modulation of the TLR4-mediated immune response.

It is found in the golgi apparatus membrane. Its subcellular location is the cell membrane. The protein localises to the membrane. It localises to the caveola. The protein resides in the membrane raft. Functionally, may act as a scaffolding protein within caveolar membranes. Forms a stable heterooligomeric complex with CAV2 that targets to lipid rafts and drives caveolae formation. Mediates the recruitment of CAVIN proteins (CAVIN1/2/3/4) to the caveolae. Interacts directly with G-protein alpha subunits and can functionally regulate their activity. Involved in the costimulatory signal essential for T-cell receptor (TCR)-mediated T-cell activation. Its binding to DPP4 induces T-cell proliferation and NF-kappa-B activation in a T-cell receptor/CD3-dependent manner. Recruits CTNNB1 to caveolar membranes and may regulate CTNNB1-mediated signaling through the Wnt pathway. Negatively regulates TGFB1-mediated activation of SMAD2/3 by mediating the internalization of TGFBR1 from membrane rafts leading to its subsequent degradation. Binds 20(S)-hydroxycholesterol (20(S)-OHC). This Dasypus novemcinctus (Nine-banded armadillo) protein is Caveolin-1 (CAV1).